Here is a 181-residue protein sequence, read N- to C-terminus: Peptidyl-tRNA hydrolase 2, mitochondrial (181 aa).

The chain crosses the membrane as a helical span at residues 10 to 32; it reads YLVHPGTLSLAAGVACGMCLGWG. Glycyl lysine isopeptide (Lys-Gly) (interchain with G-Cter in ubiquitin) cross-links involve residues lysine 78, lysine 83, lysine 97, lysine 108, lysine 117, and lysine 179.

It belongs to the PTH2 family. As to quaternary structure, monomer. Post-translationally, ubiquitinated by PRKN during mitophagy, leading to its degradation and enhancement of mitophagy. Deubiquitinated by USP30.

It localises to the mitochondrion outer membrane. It carries out the reaction an N-acyl-L-alpha-aminoacyl-tRNA + H2O = an N-acyl-L-amino acid + a tRNA + H(+). Peptidyl-tRNA hydrolase which releases tRNAs from the ribosome during protein synthesis. Promotes caspase-independent apoptosis by regulating the function of two transcriptional regulators, AES and TLE1. The chain is Peptidyl-tRNA hydrolase 2, mitochondrial (Ptrh2) from Mus musculus (Mouse).